The primary structure comprises 62 residues: Conotoxin Lt5.8 (62 aa).

The first 19 residues, 1–19 (MLCLPVFIILLLLVSPAAT), serve as a signal peptide directing secretion. Positions 20-47 (MPVDLEILKAPTKESRKDFEMRIELLRS) are excised as a propeptide. Residue Gln-50 is modified to Pyrrolidone carboxylic acid. Gln-61 bears the Glutamine amide mark.

The protein belongs to the conotoxin T superfamily. Contains 2 disulfide bonds that can be either 'C1-C3, C2-C4' or 'C1-C4, C2-C3', since these disulfide connectivities have been observed for conotoxins with cysteine framework V (for examples, see AC P0DQQ7 and AC P81755). Expressed by the venom duct.

It localises to the secreted. The polypeptide is Conotoxin Lt5.8 (Conus litteratus (Lettered cone)).